The sequence spans 319 residues: Ribosomal RNA large subunit methyltransferase F (319 aa).

The segment at 1–25 (MAPFFSAMTSKKQSQGLPKGPHPDN) is disordered. Positions 7–16 (AMTSKKQSQG) are enriched in polar residues.

Belongs to the methyltransferase superfamily. METTL16/RlmF family.

Its subcellular location is the cytoplasm. The catalysed reaction is adenosine(1618) in 23S rRNA + S-adenosyl-L-methionine = N(6)-methyladenosine(1618) in 23S rRNA + S-adenosyl-L-homocysteine + H(+). In terms of biological role, specifically methylates the adenine in position 1618 of 23S rRNA. This chain is Ribosomal RNA large subunit methyltransferase F, found in Shewanella amazonensis (strain ATCC BAA-1098 / SB2B).